The following is a 298-amino-acid chain: MGGISAASVRGWLRHHVVMASHTSWRVGGPAQRLYRPADRDDLIAFLRFLPRNEPLLWLGLGSNLLVRDGGISGTVIAIAGVLNRIERRTDTTVWVEAGVSCAKLAKFCAREGLRGAEFLAGIPGTVGGALAMNAGAFGGTMWELVTAVEVAGIGGEHCRRLPQEYQVSYREVHGPEREWFLAAELRLTLGNSQVAQQQIRRLLRQRNGCQPIRQPCAGSVFRNPWNDKAGRLIEACGLKGASIGGARVSERHANFIVNTGNASAADVEHLIQWVAETVARQAGVSLVPEVHMVGEPA.

Positions 27-206 (VGGPAQRLYR…QQQIRRLLRQ (180 aa)) constitute an FAD-binding PCMH-type domain. Arginine 171 is an active-site residue. Residue serine 220 is the Proton donor of the active site. Glutamate 290 is a catalytic residue.

It belongs to the MurB family. FAD is required as a cofactor.

It localises to the cytoplasm. The enzyme catalyses UDP-N-acetyl-alpha-D-muramate + NADP(+) = UDP-N-acetyl-3-O-(1-carboxyvinyl)-alpha-D-glucosamine + NADPH + H(+). It participates in cell wall biogenesis; peptidoglycan biosynthesis. Functionally, cell wall formation. The sequence is that of UDP-N-acetylenolpyruvoylglucosamine reductase from Nitrosococcus oceani (strain ATCC 19707 / BCRC 17464 / JCM 30415 / NCIMB 11848 / C-107).